A 329-amino-acid chain; its full sequence is Peroxidase 51 (329 aa).

Residues methionine 1–alanine 25 form the signal peptide. Cystine bridges form between cysteine 36-cysteine 119, cysteine 69-cysteine 74, cysteine 125-cysteine 325, and cysteine 204-cysteine 236. Histidine 67 functions as the Proton acceptor in the catalytic mechanism. Aspartate 68, valine 71, glycine 73, aspartate 75, and serine 77 together coordinate Ca(2+). Proline 167 is a substrate binding site. Histidine 197 is a heme b binding site. Ca(2+) is bound at residue threonine 198. A glycan (N-linked (GlcNAc...) asparagine) is linked at asparagine 215. Aspartate 249, threonine 252, and aspartate 257 together coordinate Ca(2+).

The protein belongs to the peroxidase family. Classical plant (class III) peroxidase subfamily. The cofactor is heme b. Ca(2+) serves as cofactor.

Its subcellular location is the secreted. The enzyme catalyses 2 a phenolic donor + H2O2 = 2 a phenolic radical donor + 2 H2O. Its function is as follows. Removal of H(2)O(2), oxidation of toxic reductants, biosynthesis and degradation of lignin, suberization, auxin catabolism, response to environmental stresses such as wounding, pathogen attack and oxidative stress. These functions might be dependent on each isozyme/isoform in each plant tissue. The polypeptide is Peroxidase 51 (PER51) (Arabidopsis thaliana (Mouse-ear cress)).